The following is a 438-amino-acid chain: uncharacterized protein (438 aa).

His59 contacts Zn(2+). Catalysis depends on Glu62, which acts as the Proton acceptor. 2 residues coordinate Zn(2+): His63 and Glu139.

This sequence belongs to the peptidase M16 family. Zn(2+) serves as cofactor.

This is an uncharacterized protein from Mycobacterium bovis (strain ATCC BAA-935 / AF2122/97).